Consider the following 612-residue polypeptide: Proline-rich protein 14 (612 aa).

Position 1 is an N-acetylmethionine (methionine 1). Polar residues-rich tracts occupy residues 1–15 (MDLP…QPSL) and 86–96 (VCTQSPALPSQ). Disordered regions lie at residues 1–48 (MDLP…EKAS), 65–96 (VPLT…LPSQ), 119–150 (RARQ…QVPQ), and 206–256 (PTLT…PALE). Residues 1 to 135 (MDLPGNSSPF…ALRMRSRAAS (135 aa)) form a sufficient for heterochromatin association in interphase and chromatin association in anaphase region. Residues 85 to 405 (PVCTQSPALP…MARTPPPPRP (321 aa)) form a required for the interaction with GRB2 and sufficient to promote the phosphorylation of AKT and cell proliferation region. The segment at 136–392 (GPEESPSKKT…QSRPRRHTVG (257 aa)) is required for nuclear lamina association. Over residues 243-252 (ADPPESPVPD) the composition is skewed to pro residues. Serine 307 is subject to Phosphoserine. Disordered regions lie at residues 323-405 (QSRA…PPRP), 444-463 (LGST…FSDP), and 553-583 (DSSL…PSQD). The span at 342–359 (WRTQCNSLAPVSKSSLGR) shows a compositional bias: polar residues. Positions 366–379 (LGPPDPGSWPPVPS) are enriched in pro residues. A compositionally biased stretch (basic and acidic residues) spans 448–463 (KGKELRASKDKVFSDP). Residues 546 to 563 (RRAVEFRDSSLPRSRRPS) are required for nuclear localization. The span at 570 to 583 (ASRTLTPNLAPSQD) shows a compositional bias: polar residues.

In terms of assembly, interacts (via proline-rich region) with GRB2 (via SH3 domain 2). Interacts (via N-terminus) with CBX5.

It is found in the chromosome. It localises to the nucleus. Its subcellular location is the nucleus lamina. The protein localises to the nucleoplasm. Its function is as follows. Functions in tethering peripheral heterochromatin to the nuclear lamina during interphase, possibly through the interaction with heterochromatin protein CBX5/HP1 alpha. Might play a role in reattaching heterochromatin to the nuclear lamina at mitotic exit. Promotes myoblast differentiation during skeletal myogenesis, possibly by stimulating transcription factor MyoD activity via binding to CBX5/HP1 alpha. Involved in the positive regulation of the PI3K-Akt-mTOR signaling pathway and in promoting cell proliferation, possibly via binding to GRB2. The chain is Proline-rich protein 14 (Prr14) from Mus musculus (Mouse).